Here is a 200-residue protein sequence, read N- to C-terminus: Recombination protein RecR (200 aa).

Residues 59–74 (CSTCGSLDTQDPCAIC) form a C4-type zinc finger. Residues 82-177 (SLICVVEEVG…TVSMLARGVP (96 aa)) form the Toprim domain.

This sequence belongs to the RecR family.

Functionally, may play a role in DNA repair. It seems to be involved in an RecBC-independent recombinational process of DNA repair. It may act with RecF and RecO. This Phenylobacterium zucineum (strain HLK1) protein is Recombination protein RecR.